A 618-amino-acid chain; its full sequence is Beta-xylosidase (618 aa).

Disordered stretches follow at residues 76 to 100 (ERDRYTTDESDSGSSERHSVQQEES) and 463 to 509 (LEPQ…PPIQ).

Belongs to the glycosyl hydrolase 52 family.

It is found in the secreted. It carries out the reaction Hydrolysis of (1-&gt;4)-beta-D-xylans, to remove successive D-xylose residues from the non-reducing termini.. It functions in the pathway glycan degradation; xylan degradation. This is Beta-xylosidase (xylA) from Geobacillus stearothermophilus (Bacillus stearothermophilus).